The sequence spans 223 residues: NAD(P)H-hydrate epimerase (223 aa).

A YjeF N-terminal domain is found at 9–209 (MQKIDTYTVN…DIGLLTPPDF (201 aa)). A (6S)-NADPHX-binding site is contributed by 57–61 (NNGAD). Residues asparagine 58 and aspartate 119 each contribute to the K(+) site. (6S)-NADPHX is bound by residues 123-129 (GTGLNNL) and aspartate 152. Threonine 155 lines the K(+) pocket.

Belongs to the NnrE/AIBP family. Requires K(+) as cofactor.

The catalysed reaction is (6R)-NADHX = (6S)-NADHX. It catalyses the reaction (6R)-NADPHX = (6S)-NADPHX. In terms of biological role, catalyzes the epimerization of the S- and R-forms of NAD(P)HX, a damaged form of NAD(P)H that is a result of enzymatic or heat-dependent hydration. This is a prerequisite for the S-specific NAD(P)H-hydrate dehydratase to allow the repair of both epimers of NAD(P)HX. This Leuconostoc gelidum subsp. gasicomitatum (strain DSM 15947 / CCUG 46042 / CECT 5767 / JCM 12535 / LMG 18811 / NBRC 113245 / TB1-10) (Leuconostoc gasicomitatum) protein is NAD(P)H-hydrate epimerase.